Reading from the N-terminus, the 407-residue chain is Tryptophan synthase beta chain (407 aa).

N6-(pyridoxal phosphate)lysine is present on Lys86.

The protein belongs to the TrpB family. Tetramer of two alpha and two beta chains. Pyridoxal 5'-phosphate is required as a cofactor.

It catalyses the reaction (1S,2R)-1-C-(indol-3-yl)glycerol 3-phosphate + L-serine = D-glyceraldehyde 3-phosphate + L-tryptophan + H2O. It functions in the pathway amino-acid biosynthesis; L-tryptophan biosynthesis; L-tryptophan from chorismate: step 5/5. In terms of biological role, the beta subunit is responsible for the synthesis of L-tryptophan from indole and L-serine. The chain is Tryptophan synthase beta chain from Shewanella woodyi (strain ATCC 51908 / MS32).